The sequence spans 274 residues: Large ribosomal subunit protein uL2 (274 aa).

The interval 197–274 (NSDHALEKSG…SKYIIERRKK (78 aa)) is disordered. Basic residues-rich tracts occupy residues 207-220 (KAGRSRWLGRRPHN) and 244-274 (PRSRKGLYAKGLKTRAPKKHSSKYIIERRKK).

It belongs to the universal ribosomal protein uL2 family. As to quaternary structure, part of the 50S ribosomal subunit. Forms a bridge to the 30S subunit in the 70S ribosome.

Functionally, one of the primary rRNA binding proteins. Required for association of the 30S and 50S subunits to form the 70S ribosome, for tRNA binding and peptide bond formation. It has been suggested to have peptidyltransferase activity; this is somewhat controversial. Makes several contacts with the 16S rRNA in the 70S ribosome. The sequence is that of Large ribosomal subunit protein uL2 from Porphyromonas gingivalis (strain ATCC BAA-308 / W83).